The chain runs to 78 residues: Small ribosomal subunit protein bS18 (78 aa).

This sequence belongs to the bacterial ribosomal protein bS18 family. Part of the 30S ribosomal subunit. Forms a tight heterodimer with protein bS6.

In terms of biological role, binds as a heterodimer with protein bS6 to the central domain of the 16S rRNA, where it helps stabilize the platform of the 30S subunit. In Lactobacillus acidophilus (strain ATCC 700396 / NCK56 / N2 / NCFM), this protein is Small ribosomal subunit protein bS18.